Here is a 217-residue protein sequence, read N- to C-terminus: 3,4-dihydroxy-2-butanone 4-phosphate synthase (217 aa).

D-ribulose 5-phosphate-binding positions include 37-38 (RE), Asp42, 150-154 (RGGHT), and Glu174. Position 38 (Glu38) interacts with Mg(2+). Residue His153 coordinates Mg(2+).

The protein belongs to the DHBP synthase family. In terms of assembly, homodimer. The cofactor is Mg(2+). Mn(2+) serves as cofactor.

It carries out the reaction D-ribulose 5-phosphate = (2S)-2-hydroxy-3-oxobutyl phosphate + formate + H(+). It participates in cofactor biosynthesis; riboflavin biosynthesis; 2-hydroxy-3-oxobutyl phosphate from D-ribulose 5-phosphate: step 1/1. In terms of biological role, catalyzes the conversion of D-ribulose 5-phosphate to formate and 3,4-dihydroxy-2-butanone 4-phosphate. In Proteus mirabilis (strain HI4320), this protein is 3,4-dihydroxy-2-butanone 4-phosphate synthase.